Here is a 216-residue protein sequence, read N- to C-terminus: uncharacterized protein (216 aa).

2 4Fe-4S ferredoxin-type domains span residues 160–189 (DDKPINDEFCTGCGTCVAKCPANALTIDEK) and 188–216 (EKPKVNISKCIKCGTCFFNCIRVKEALLP). [4Fe-4S] cluster-binding residues include cysteine 169, cysteine 172, cysteine 175, cysteine 179, cysteine 197, cysteine 200, cysteine 203, and cysteine 207.

This sequence belongs to the FrhG family.

This is an uncharacterized protein from Methanocaldococcus jannaschii (strain ATCC 43067 / DSM 2661 / JAL-1 / JCM 10045 / NBRC 100440) (Methanococcus jannaschii).